The chain runs to 697 residues: tRNA 5-methylaminomethyl-2-thiouridine biosynthesis bifunctional protein MnmC (697 aa).

The segment at 1-269 is tRNA (mnm(5)s(2)U34)-methyltransferase; it reads MNKTPLLSVS…LRQQLQQQFA (269 aa). The tract at residues 287–697 is FAD-dependent cmnm(5)s(2)U34 oxidoreductase; the sequence is IGGGIASASL…RKLLKGKALM (411 aa).

This sequence in the N-terminal section; belongs to the methyltransferase superfamily. tRNA (mnm(5)s(2)U34)-methyltransferase family. In the C-terminal section; belongs to the DAO family. Requires FAD as cofactor.

The protein localises to the cytoplasm. The catalysed reaction is 5-aminomethyl-2-thiouridine(34) in tRNA + S-adenosyl-L-methionine = 5-methylaminomethyl-2-thiouridine(34) in tRNA + S-adenosyl-L-homocysteine + H(+). Functionally, catalyzes the last two steps in the biosynthesis of 5-methylaminomethyl-2-thiouridine (mnm(5)s(2)U) at the wobble position (U34) in tRNA. Catalyzes the FAD-dependent demodification of cmnm(5)s(2)U34 to nm(5)s(2)U34, followed by the transfer of a methyl group from S-adenosyl-L-methionine to nm(5)s(2)U34, to form mnm(5)s(2)U34. This chain is tRNA 5-methylaminomethyl-2-thiouridine biosynthesis bifunctional protein MnmC, found in Shewanella frigidimarina (strain NCIMB 400).